The following is a 625-amino-acid chain: Low affinity potassium transport system protein Kup (625 aa).

A run of 12 helical transmembrane segments spans residues threonine 15–isoleucine 35, isoleucine 58–isoleucine 78, phenylalanine 103–isoleucine 123, leucine 140–isoleucine 160, isoleucine 171–isoleucine 191, phenylalanine 218–isoleucine 238, leucine 251–leucine 271, phenylalanine 282–isoleucine 302, isoleucine 340–phenylalanine 360, leucine 366–leucine 386, phenylalanine 396–isoleucine 416, and isoleucine 422–threonine 442.

The protein belongs to the HAK/KUP transporter (TC 2.A.72) family.

It localises to the cell membrane. The enzyme catalyses K(+)(in) + H(+)(in) = K(+)(out) + H(+)(out). Functionally, responsible for the low-affinity transport of potassium into the cell. Likely operates as a K(+):H(+) symporter. This chain is Low affinity potassium transport system protein Kup, found in Wigglesworthia glossinidia brevipalpis.